Here is a 429-residue protein sequence, read N- to C-terminus: 3-phosphoshikimate 1-carboxyvinyltransferase (429 aa).

3-phosphoshikimate contacts are provided by K11, S12, and R16. K11 contacts phosphoenolpyruvate. Phosphoenolpyruvate-binding residues include G82 and R110. 3-phosphoshikimate-binding residues include S155, Q157, D302, and K329. Position 157 (Q157) interacts with phosphoenolpyruvate. Catalysis depends on D302, which acts as the Proton acceptor. Phosphoenolpyruvate contacts are provided by R333 and R385.

This sequence belongs to the EPSP synthase family. As to quaternary structure, monomer.

The protein resides in the cytoplasm. It carries out the reaction 3-phosphoshikimate + phosphoenolpyruvate = 5-O-(1-carboxyvinyl)-3-phosphoshikimate + phosphate. It functions in the pathway metabolic intermediate biosynthesis; chorismate biosynthesis; chorismate from D-erythrose 4-phosphate and phosphoenolpyruvate: step 6/7. Functionally, catalyzes the transfer of the enolpyruvyl moiety of phosphoenolpyruvate (PEP) to the 5-hydroxyl of shikimate-3-phosphate (S3P) to produce enolpyruvyl shikimate-3-phosphate and inorganic phosphate. This Helicobacter pylori (strain P12) protein is 3-phosphoshikimate 1-carboxyvinyltransferase.